A 1005-amino-acid polypeptide reads, in one-letter code: MASAGPTGAGARPPKAFTAQAGLAKLVNPAGLNSILARGKEKFGGTQAWKELMGCDVIFARSISHWYGIKGTTYYELTVALGQPLYKPVTDPELTEEEKAVMTAVQSRFAQSNSSVVLTRTLLNKTCELKDRIRELTDELGQTEVHLAREKVKAAALKLENRKLFVENQELKDQLEKERTKHGWKGLKTLCLWIFLATLIGGYITGSNAACTLVDVPSPMKVGYDTFKQMCIHKDSYLPDGAFDKESLALECSKQMDYMDCKEVITDSISGKTSFAGMLRDVFRVDEIVTAIRTVVRFAMDFSLAYPICVMFVLILTRNKKHAIISACCALVAKCCGLRLLPFTLVLTYAPSETAIAGCIYGLGYISIPLVTFLHWVGLVLKAILVPDDCYIGTRVSHALAWSIMLPMWIITQELMAFTEFPLELQIVTTVVVCTAGFGFRYLTGTVTITEPDGTVKKYKRIFNAKSAIGTISTVFFEKAKAIRGVIPSFPSKADNIVKIEVDVDGGSAGVGFRLGNYIYTAGHVVGEAKIAKITWKGLTSQAKVLGHIELPLFTDTLARLEIPKPFQQLPVFRLAKSSENDYVQMVCFDNQLQNVVTFSGWANIDGDYLNAPFETYAGTSGSPIINRDGRMLGVHFGSNAVVSQGFVITRLFATEPAVKQCKSDEDLADEIVRKVMGGIRISFASLTSELEKQRDELNALKQMVNDLIDTDLVALEKKKGKTKRTVRGQKHKTKAISKAAFMKTKVLTEEEYRRLEEEGFTKDEIKDIVDNLREQAWLDYQNQLDEEGDDDWYEQMEEDQRINDQIDQNIERDLEDRGEWYGQRKITFKQRAMLRFIQLGRQQQVATVSFPDGYEDRAEELYNKVVTTEDLPEGETSEAALSLPNKIVHQAGKRLNFKHVKIHPDKTFMKSGVTQIEEKPEGDIILKAKTTTLAPKEEPVIQQVEQQPQVEQQQQPQQPVVEEKKRTPPPKPQRKPKTGAKAKCLDCGETFVERQDFHVCKSKN.

4 helical membrane passes run 239–259 (PDGA…MDYM), 286–306 (DEIV…SLAY), 313–333 (VLIL…ALVA), and 344–364 (TLVL…YGLG). Residues His524, Asp556, and Ser621 each act as charge relay system; for serine protease activity in the active site. Tyr753 carries the O-(5'-phospho-RNA)-tyrosine modification. Positions 940-984 (PVIQQVEQQPQVEQQQQPQQPVVEEKKRTPPPKPQRKPKTGAKAK) are disordered. A compositionally biased stretch (low complexity) spans 941–961 (VIQQVEQQPQVEQQQQPQQPV).

Belongs to the astroviridae polyprotein 1A family. As to quaternary structure, monomer. In terms of processing, cleaved by the viral and host proteases. The protease is probably autocatalytically cleaved.

The protein resides in the host membrane. It catalyses the reaction RNA(n) + a ribonucleoside 5'-triphosphate = RNA(n+1) + diphosphate. Responsible for the cleavage of the polyprotein into functional products. In terms of biological role, protein covalently attached to the 5' extremity of the genomic and subgenomic RNAs. It may serve as a primer for the replicase. This Avian nephritis virus 1 (ANV-1) protein is Non-structural polyprotein 1A (ORF1).